Consider the following 294-residue polypeptide: Nucleotide-binding protein LVIS_0651 (294 aa).

12-19 contributes to the ATP binding site; sequence GMSGAGKT. 62–65 provides a ligand contact to GTP; it reads DLRS.

This sequence belongs to the RapZ-like family.

Functionally, displays ATPase and GTPase activities. This is Nucleotide-binding protein LVIS_0651 from Levilactobacillus brevis (strain ATCC 367 / BCRC 12310 / CIP 105137 / JCM 1170 / LMG 11437 / NCIMB 947 / NCTC 947) (Lactobacillus brevis).